Consider the following 264-residue polypeptide: Methionine aminopeptidase (264 aa).

Histidine 79 serves as a coordination point for substrate. A divalent metal cation-binding residues include aspartate 97, aspartate 108, and histidine 171. Position 178 (histidine 178) interacts with substrate. 2 residues coordinate a divalent metal cation: glutamate 204 and glutamate 235.

The protein belongs to the peptidase M24A family. Methionine aminopeptidase type 1 subfamily. In terms of assembly, monomer. Co(2+) is required as a cofactor. Zn(2+) serves as cofactor. Requires Mn(2+) as cofactor. It depends on Fe(2+) as a cofactor.

It catalyses the reaction Release of N-terminal amino acids, preferentially methionine, from peptides and arylamides.. Functionally, removes the N-terminal methionine from nascent proteins. The N-terminal methionine is often cleaved when the second residue in the primary sequence is small and uncharged (Met-Ala-, Cys, Gly, Pro, Ser, Thr, or Val). Requires deformylation of the N(alpha)-formylated initiator methionine before it can be hydrolyzed. The polypeptide is Methionine aminopeptidase (Escherichia coli O157:H7).